Consider the following 351-residue polypeptide: Glycerol-1-phosphate dehydrogenase [NAD(P)+] (351 aa).

Residues Gly-93–Asp-97 and Thr-115–Ser-118 contribute to the NAD(+) site. Asp-120 contacts substrate. Residue Ser-124 coordinates NAD(+). Position 167 (Asp-167) interacts with substrate. Residues Asp-167 and His-247 each contribute to the Zn(2+) site. A substrate-binding site is contributed by His-251. His-263 is a binding site for Zn(2+).

It belongs to the glycerol-1-phosphate dehydrogenase family. The cofactor is Zn(2+).

It is found in the cytoplasm. The enzyme catalyses sn-glycerol 1-phosphate + NAD(+) = dihydroxyacetone phosphate + NADH + H(+). It carries out the reaction sn-glycerol 1-phosphate + NADP(+) = dihydroxyacetone phosphate + NADPH + H(+). The protein operates within membrane lipid metabolism; glycerophospholipid metabolism. Its function is as follows. Catalyzes the NAD(P)H-dependent reduction of dihydroxyacetonephosphate (DHAP or glycerone phosphate) to glycerol 1-phosphate (G1P). The G1P thus generated is used as the glycerophosphate backbone of phospholipids in the cellular membranes of Archaea. This chain is Glycerol-1-phosphate dehydrogenase [NAD(P)+], found in Archaeoglobus fulgidus (strain ATCC 49558 / DSM 4304 / JCM 9628 / NBRC 100126 / VC-16).